A 156-amino-acid chain; its full sequence is Anaerobic nitrite reductase HB2 (156 aa).

Positions 2 to 151 (GFTDKQEALV…LASAIKAEMH (150 aa)) constitute a Globin domain. A Homodimerization motif is present at residues 35–39 (EIAPV). Positions 45, 59, 63, and 98 each coordinate heme b. The Homodimerization motif lies at 105-117 (DPHFEVVKEALLR).

This sequence belongs to the plant globin family. As to quaternary structure, homodimer. Heme b is required as a cofactor.

The protein resides in the cytoplasm. Its subcellular location is the nucleus. It carries out the reaction Fe(III)-heme b-[protein] + nitric oxide + H2O = Fe(II)-heme b-[protein] + nitrite + 2 H(+). Its function is as follows. Phytoglobin that reduces nitrite to nitric oxide (NO) under anoxic conditions (e.g. during flooding or in waterlogged soil). May not function as an oxygen storage or transport protein. Has an unusually high affinity for O(2) through an hexacoordinate heme iron because of a very low dissociation constant. The protein is Anaerobic nitrite reductase HB2 of Solanum lycopersicum (Tomato).